The following is a 229-amino-acid chain: Leucyl/phenylalanyl-tRNA--protein transferase (229 aa).

The protein belongs to the L/F-transferase family.

It is found in the cytoplasm. It carries out the reaction N-terminal L-lysyl-[protein] + L-leucyl-tRNA(Leu) = N-terminal L-leucyl-L-lysyl-[protein] + tRNA(Leu) + H(+). The catalysed reaction is N-terminal L-arginyl-[protein] + L-leucyl-tRNA(Leu) = N-terminal L-leucyl-L-arginyl-[protein] + tRNA(Leu) + H(+). It catalyses the reaction L-phenylalanyl-tRNA(Phe) + an N-terminal L-alpha-aminoacyl-[protein] = an N-terminal L-phenylalanyl-L-alpha-aminoacyl-[protein] + tRNA(Phe). Functions in the N-end rule pathway of protein degradation where it conjugates Leu, Phe and, less efficiently, Met from aminoacyl-tRNAs to the N-termini of proteins containing an N-terminal arginine or lysine. The sequence is that of Leucyl/phenylalanyl-tRNA--protein transferase from Pseudomonas syringae pv. tomato (strain ATCC BAA-871 / DC3000).